Reading from the N-terminus, the 492-residue chain is Putative protein disulfide-isomerase C1F5.02 (492 aa).

The signal sequence occupies residues 1-22 (MKISNLLAAFLAFSGGFFCASA). One can recognise a Thioredoxin 1 domain in the interval 23 to 128 (EVPKVNKEGL…LVKYMRKQLL (106 aa)). Residues Cys51 and Cys54 each act as nucleophile in the active site. A disulfide bridge links Cys51 with Cys54. Asn161 and Asn257 each carry an N-linked (GlcNAc...) asparagine glycan. One can recognise a Thioredoxin 2 domain in the interval 323–462 (ELTAKAMTKF…LSAFIDKHAS (140 aa)). Catalysis depends on nucleophile residues Cys385 and Cys388. Cysteines 385 and 388 form a disulfide. The disordered stretch occupies residues 468-492 (KEKESVPAPDLEDQVAVEDEMADEL). Residues 477–492 (DLEDQVAVEDEMADEL) are compositionally biased toward acidic residues. The Prevents secretion from ER signature appears at 489 to 492 (ADEL).

The protein belongs to the protein disulfide isomerase family.

It is found in the endoplasmic reticulum lumen. The catalysed reaction is Catalyzes the rearrangement of -S-S- bonds in proteins.. Participates in the folding of proteins containing disulfide bonds, may be involved in glycosylation, prolyl hydroxylation and triglyceride transfer. The polypeptide is Putative protein disulfide-isomerase C1F5.02 (Schizosaccharomyces pombe (strain 972 / ATCC 24843) (Fission yeast)).